A 588-amino-acid chain; its full sequence is DNA mismatch repair protein MutL (588 aa).

It belongs to the DNA mismatch repair MutL/HexB family.

This protein is involved in the repair of mismatches in DNA. It is required for dam-dependent methyl-directed DNA mismatch repair. May act as a 'molecular matchmaker', a protein that promotes the formation of a stable complex between two or more DNA-binding proteins in an ATP-dependent manner without itself being part of a final effector complex. This Fervidobacterium nodosum (strain ATCC 35602 / DSM 5306 / Rt17-B1) protein is DNA mismatch repair protein MutL.